We begin with the raw amino-acid sequence, 448 residues long: C4-dicarboxylate transport protein (448 aa).

9 helical membrane passes run 13-33, 49-69, 81-101, 149-169, 193-213, 227-247, 294-314, 336-356, and 357-377; these read SLYA…HFYP, LIKM…IAGM, LALL…LLVV, AFAK…GFAL, IVGI…AFTI, LMGA…GIVS, VVGL…SIYL, TLLA…GSGF, and IVLA…LALI.

It belongs to the dicarboxylate/amino acid:cation symporter (DAACS) (TC 2.A.23) family.

It localises to the cell inner membrane. Functionally, responsible for the transport of dicarboxylates such as succinate, fumarate, and malate from the periplasm across the membrane. The polypeptide is C4-dicarboxylate transport protein (Albidiferax ferrireducens (strain ATCC BAA-621 / DSM 15236 / T118) (Rhodoferax ferrireducens)).